Consider the following 1187-residue polypeptide: DNA-directed RNA polymerase subunit beta (1187 aa).

The tract at residues 1150 to 1187 (KDEDDDPASSADDLGFNIGARPDAAAKEDQKAEEPEYQ) is disordered. The span at 1173-1187 (AAAKEDQKAEEPEYQ) shows a compositional bias: basic and acidic residues.

The protein belongs to the RNA polymerase beta chain family. In terms of assembly, the RNAP catalytic core consists of 2 alpha, 1 beta, 1 beta' and 1 omega subunit. When a sigma factor is associated with the core the holoenzyme is formed, which can initiate transcription.

The catalysed reaction is RNA(n) + a ribonucleoside 5'-triphosphate = RNA(n+1) + diphosphate. DNA-dependent RNA polymerase catalyzes the transcription of DNA into RNA using the four ribonucleoside triphosphates as substrates. The polypeptide is DNA-directed RNA polymerase subunit beta (Bifidobacterium longum (strain NCC 2705)).